The chain runs to 130 residues: Ribosome-binding factor A (130 aa).

It belongs to the RbfA family. In terms of assembly, monomer. Binds 30S ribosomal subunits, but not 50S ribosomal subunits or 70S ribosomes.

It is found in the cytoplasm. In terms of biological role, one of several proteins that assist in the late maturation steps of the functional core of the 30S ribosomal subunit. Associates with free 30S ribosomal subunits (but not with 30S subunits that are part of 70S ribosomes or polysomes). Required for efficient processing of 16S rRNA. May interact with the 5'-terminal helix region of 16S rRNA. This chain is Ribosome-binding factor A, found in Methylibium petroleiphilum (strain ATCC BAA-1232 / LMG 22953 / PM1).